We begin with the raw amino-acid sequence, 475 residues long: Aspartyl/glutamyl-tRNA(Asn/Gln) amidotransferase subunit B (475 aa).

Belongs to the GatB/GatE family. GatB subfamily. Heterotrimer of A, B and C subunits.

The enzyme catalyses L-glutamyl-tRNA(Gln) + L-glutamine + ATP + H2O = L-glutaminyl-tRNA(Gln) + L-glutamate + ADP + phosphate + H(+). It catalyses the reaction L-aspartyl-tRNA(Asn) + L-glutamine + ATP + H2O = L-asparaginyl-tRNA(Asn) + L-glutamate + ADP + phosphate + 2 H(+). Allows the formation of correctly charged Asn-tRNA(Asn) or Gln-tRNA(Gln) through the transamidation of misacylated Asp-tRNA(Asn) or Glu-tRNA(Gln) in organisms which lack either or both of asparaginyl-tRNA or glutaminyl-tRNA synthetases. The reaction takes place in the presence of glutamine and ATP through an activated phospho-Asp-tRNA(Asn) or phospho-Glu-tRNA(Gln). This chain is Aspartyl/glutamyl-tRNA(Asn/Gln) amidotransferase subunit B, found in Thiobacillus denitrificans (strain ATCC 25259 / T1).